The chain runs to 1484 residues: Chromosome partition protein MukB (1484 aa).

Gly34–Ser41 serves as a coordination point for ATP. 6 coiled-coil regions span residues Asn338–Gln415, Gln496–Trp604, Ala781–Ser805, Glu835–Gln868, His903–Ala1115, and Asp1206–Val1265. The interval Pro666–Arg783 is flexible hinge.

This sequence belongs to the SMC family. MukB subfamily. Homodimerization via its hinge domain. Binds to DNA via its C-terminal region. Interacts, and probably forms a ternary complex, with MukE and MukF via its C-terminal region. The complex formation is stimulated by calcium or magnesium. Interacts with tubulin-related protein FtsZ.

It localises to the cytoplasm. The protein resides in the nucleoid. In terms of biological role, plays a central role in chromosome condensation, segregation and cell cycle progression. Functions as a homodimer, which is essential for chromosome partition. Involved in negative DNA supercoiling in vivo, and by this means organize and compact chromosomes. May achieve or facilitate chromosome segregation by condensation DNA from both sides of a centrally located replisome during cell division. The chain is Chromosome partition protein MukB from Sodalis glossinidius (strain morsitans).